Here is an 83-residue protein sequence, read N- to C-terminus: U5-theraphotoxin-Hs1a 3 (83 aa).

Positions 1–21 (MKTSMFLTLTGLVLLFVVCYA) are cleaved as a signal peptide. A propeptide spanning residues 22–49 (SESEEKDFPKELLSSIFAADSDFKVEER) is cleaved from the precursor. Disulfide bonds link Cys51–Cys63, Cys56–Cys68, and Cys62–Cys75.

It belongs to the neurotoxin 10 (Hwtx-1) family. 51 (Hntx-8) subfamily. Hntx-8 sub-subfamily. Expressed by the venom gland.

The protein localises to the secreted. In terms of biological role, agglutinates erythrocytes. The protein is U5-theraphotoxin-Hs1a 3 of Cyriopagopus schmidti (Chinese bird spider).